The following is an 841-amino-acid chain: Translation initiation factor IF-2 (841 aa).

5 stretches are compositionally biased toward basic and acidic residues: residues 1–12 (MSDNEIKNEAPK), 50–92 (EAAL…EATK), 114–170 (EQPK…REEA), 188–202 (READRDNDRRSEANR), and 213–235 (KKGDREDKNERNADRRNQKDVKG). 2 disordered regions span residues 1 to 24 (MSDNEIKNEAPKKLSLQRRTKTTV) and 50 to 246 (EAAL…GSAL). Residues 340-510 (TRAPVVTIMG…LLQSEVLELT (171 aa)) form the tr-type G domain. The tract at residues 349–356 (GHVDHGKT) is G1. Position 349 to 356 (349 to 356 (GHVDHGKT)) interacts with GTP. The tract at residues 374–378 (GITQH) is G2. The G3 stretch occupies residues 396–399 (DTPG). Residues 396-400 (DTPGH) and 450-453 (NKID) contribute to the GTP site. The tract at residues 450–453 (NKID) is G4. The interval 486–488 (SAK) is G5.

It belongs to the TRAFAC class translation factor GTPase superfamily. Classic translation factor GTPase family. IF-2 subfamily.

The protein resides in the cytoplasm. In terms of biological role, one of the essential components for the initiation of protein synthesis. Protects formylmethionyl-tRNA from spontaneous hydrolysis and promotes its binding to the 30S ribosomal subunits. Also involved in the hydrolysis of GTP during the formation of the 70S ribosomal complex. The sequence is that of Translation initiation factor IF-2 from Actinobacillus pleuropneumoniae serotype 3 (strain JL03).